Consider the following 90-residue polypeptide: MFNTALLLAQASPTTAGWSLSVGIIMCLCNVFAFVIGYFAIQKTGKGKDLALPQLASKKTFGLPELLATMSFGHILGAGMVLGLASSGIL.

A run of 2 helical transmembrane segments spans residues 20 to 42 and 67 to 89; these read LSVG…FAIQ and LATM…SSGI.

It belongs to the PsaG/PsaK family.

Its subcellular location is the cellular thylakoid membrane. The sequence is that of Photosystem I reaction center subunit PsaK 2 (psaK2) from Synechocystis sp. (strain ATCC 27184 / PCC 6803 / Kazusa).